A 487-amino-acid chain; its full sequence is Cytochrome c-552 (487 aa).

The signal sequence occupies residues 1–27; sequence MSKKWTRNTAAMAAILSALCLSTNALA. A heme c-binding site is contributed by histidine 104. 3 residues coordinate heme: cysteine 132, cysteine 135, and lysine 136. The heme c site is built by cysteine 170, cysteine 173, histidine 174, cysteine 219, cysteine 222, and histidine 223. Residues glutamate 225, tyrosine 226, lysine 271, and glutamine 273 each coordinate Ca(2+). Substrate is bound at residue tyrosine 226. Histidine 274 contributes to the substrate binding site. Residues histidine 285, cysteine 292, cysteine 295, histidine 296, histidine 311, cysteine 324, cysteine 327, histidine 328, and histidine 403 each contribute to the heme c site.

The protein belongs to the cytochrome c-552 family. Ca(2+) serves as cofactor. The cofactor is heme c.

It is found in the periplasm. The catalysed reaction is 6 Fe(III)-[cytochrome c] + NH4(+) + 2 H2O = 6 Fe(II)-[cytochrome c] + nitrite + 8 H(+). Its pathway is nitrogen metabolism; nitrate reduction (assimilation). Functionally, catalyzes the reduction of nitrite to ammonia, consuming six electrons in the process. This is Cytochrome c-552 from Photobacterium profundum (strain SS9).